We begin with the raw amino-acid sequence, 396 residues long: Stearoyl-[acyl-carrier-protein] 9-desaturase, chloroplastic (396 aa).

A chloroplast-targeting transit peptide spans 1–32; the sequence is MALKLNPVTTFPSTRSLNNFSSRSPRTFLMAA. 6 residues coordinate Fe cation: Glu138, Glu176, His179, Glu229, Glu262, and His265.

It belongs to the fatty acid desaturase type 2 family. Homodimer. Requires Fe(2+) as cofactor.

It is found in the plastid. The protein resides in the chloroplast. It catalyses the reaction octadecanoyl-[ACP] + 2 reduced [2Fe-2S]-[ferredoxin] + O2 + 2 H(+) = (9Z)-octadecenoyl-[ACP] + 2 oxidized [2Fe-2S]-[ferredoxin] + 2 H2O. It functions in the pathway lipid metabolism; fatty acid metabolism. Functionally, converts stearoyl-ACP to oleoyl-ACP by introduction of a cis double bond between carbons 9 and 10 of the acyl chain. This Linum usitatissimum (Flax) protein is Stearoyl-[acyl-carrier-protein] 9-desaturase, chloroplastic.